Consider the following 309-residue polypeptide: Thermolabile glutaminase (309 aa).

Positions 64, 114, 160, 167, 191, 243, and 261 each coordinate substrate.

Belongs to the glutaminase family. In terms of assembly, homotetramer.

The enzyme catalyses L-glutamine + H2O = L-glutamate + NH4(+). This Rhizobium etli (strain ATCC 51251 / DSM 11541 / JCM 21823 / NBRC 15573 / CFN 42) protein is Thermolabile glutaminase (glsA).